The primary structure comprises 100 residues: Thioredoxin (100 aa).

The 100-residue stretch at M1 to K100 folds into the Thioredoxin domain. Residues C29 and C32 are joined by a disulfide bond.

Belongs to the thioredoxin family.

Functionally, participates in various redox reactions through the reversible oxidation of its active center dithiol to a disulfide and catalyzes dithiol-disulfide exchange reactions. The polypeptide is Thioredoxin (trxA) (Mycoplasmoides gallisepticum (strain R(low / passage 15 / clone 2)) (Mycoplasma gallisepticum)).